Consider the following 216-residue polypeptide: Protein-L-isoaspartate O-methyltransferase (216 aa).

S66 is a catalytic residue.

It belongs to the methyltransferase superfamily. L-isoaspartyl/D-aspartyl protein methyltransferase family.

The protein localises to the cytoplasm. It carries out the reaction [protein]-L-isoaspartate + S-adenosyl-L-methionine = [protein]-L-isoaspartate alpha-methyl ester + S-adenosyl-L-homocysteine. Functionally, catalyzes the methyl esterification of L-isoaspartyl residues in peptides and proteins that result from spontaneous decomposition of normal L-aspartyl and L-asparaginyl residues. It plays a role in the repair and/or degradation of damaged proteins. The polypeptide is Protein-L-isoaspartate O-methyltransferase (Dechloromonas aromatica (strain RCB)).